A 106-amino-acid chain; its full sequence is Large ribosomal subunit protein bL21 (106 aa).

It belongs to the bacterial ribosomal protein bL21 family. Part of the 50S ribosomal subunit. Contacts protein L20.

This protein binds to 23S rRNA in the presence of protein L20. The polypeptide is Large ribosomal subunit protein bL21 (Dichelobacter nodosus (strain VCS1703A)).